A 269-amino-acid chain; its full sequence is Ethylene-responsive transcription factor ERN1 (269 aa).

Positions 1 to 15 are enriched in polar residues; sequence MEIQFQQPNLQQHQK. Disordered regions lie at residues 1-36 and 128-157; these read MEIQ…NKFV and DVPA…LSSG. Positions 34–91 form a DNA-binding region, AP2/ERF; that stretch reads KFVGVRQRPSGRWVAEIKDTTQKIRMWLGTFETAEEAARAYDEAACLLRGSNTRTNFI. Positions 128 to 146 are enriched in low complexity; that stretch reads DVPAPSASTTSTSSNTSNS.

This sequence belongs to the AP2/ERF transcription factor family. ERF subfamily.

It localises to the nucleus. Its function is as follows. Transcription factor involved in the symbiotic nodule signaling pathway in response to rhizobial stimulation. Functions as a transcriptional regulator required for root infection by symbiotic rhizobia, infection thread (IT) formation, and nodule development. May coordinate these processes. Functions downstream of the CCAMK-CYCLOPS complex. Probably not involved in arbuscular mycorrhizal (AM) symbiosis. This is Ethylene-responsive transcription factor ERN1 from Lotus japonicus (Lotus corniculatus var. japonicus).